A 510-amino-acid polypeptide reads, in one-letter code: Dolichyl-P-Man:Man5GlcNAc2-PP-dolichol alpha-1,3-mannosyltransferase Alg3 (510 aa).

Topologically, residues 1-43 are cytoplasmic; that stretch reads MAPPKAASHRPAVRRKKSGTLVDSILDKYLNVRFFKYLLLEPA. The helical transmembrane segment at 44–64 threads the bilayer; that stretch reads ALPIVGLFVLLAELVINVVVI. The Lumenal segment spans residues 65-97; that stretch reads QRVPYTEIDWVAYMQECEGFLNGTTNYSLLRGD. The helical transmembrane segment at 98-118 threads the bilayer; sequence TGPLVYPAAFVYIYSALYYVT. Over 119–125 the chain is Cytoplasmic; the sequence is SHGTNVR. Residues 126 to 146 form a helical membrane-spanning segment; that stretch reads LAQYIFAGIYLLQLALVLRLY. Topologically, residues 147–171 are lumenal; it reads SKSRKVPPYVLVLSAFTSYRIHSIY. A helical transmembrane segment spans residues 172–192; it reads VLRLFNDPVAVLLLYAALNLF. Topologically, residues 193 to 211 are cytoplasmic; the sequence is LDRRWTLGSTFFSLAVGVK. A helical membrane pass occupies residues 212–232; the sequence is MNILLFAPALLLFYLANLGLL. R233 is a topological domain (lumenal). The chain crosses the membrane as a helical span at residues 234 to 254; that stretch reads TILQLAVCGVIQLLLGAPFLL. Topologically, residues 255 to 294 are cytoplasmic; it reads THPVEYLRGSFDLGRIFEHKWTVNYRFLSRDVFENRTFHV. The chain crosses the membrane as a helical span at residues 295-315; the sequence is SLLGLHLLLLLAFAKPIWTFF. Topologically, residues 316-403 are lumenal; that stretch reads QSYVRLRRIE…YGIHFDRCTQ (88 aa). Positions 337-358 are disordered; the sequence is LQLKAQKRPKKVEKDKDKDQKK. Basic and acidic residues predominate over residues 348-358; the sequence is VEKDKDKDQKK. The chain crosses the membrane as a helical span at residues 404–424; that stretch reads LALLPFFLCNLVGVACSRSLH. Over 425–426 the chain is Cytoplasmic; the sequence is YQ. A helical transmembrane segment spans residues 427–447; sequence FYVWYFHSLPYLAWSTPYSLG. The Lumenal portion of the chain corresponds to 448–464; it reads VRCLILGLIEYCWNTYP. The chain crosses the membrane as a helical span at residues 465 to 485; that stretch reads STNFSSAALHFTHIILLAGVA. Residues 486 to 510 are Cytoplasmic-facing; it reads KQLIQTMRINNAAKREQQEQQKKLQ.

Belongs to the glycosyltransferase ALG3 family.

The protein resides in the endoplasmic reticulum membrane. The catalysed reaction is an alpha-D-Man-(1-&gt;2)-alpha-D-Man-(1-&gt;2)-alpha-D-Man-(1-&gt;3)-[alpha-D-Man-(1-&gt;6)]-beta-D-Man-(1-&gt;4)-beta-D-GlcNAc-(1-&gt;4)-alpha-D-GlcNAc-diphospho-di-trans,poly-cis-dolichol + a di-trans,poly-cis-dolichyl beta-D-mannosyl phosphate = an alpha-D-Man-(1-&gt;2)-alpha-D-Man-(1-&gt;2)-alpha-D-Man-(1-&gt;3)-[alpha-D-Man-(1-&gt;3)-alpha-D-Man-(1-&gt;6)]-beta-D-Man-(1-&gt;4)-beta-D-GlcNAc-(1-&gt;4)-alpha-D-GlcNAc-diphospho-di-trans,poly-cis-dolichol + a di-trans,poly-cis-dolichyl phosphate + H(+). Its pathway is protein modification; protein glycosylation. Its function is as follows. Probable alpha-1,3-mannosyltransferase involved in the N-glycosylation pathway. Involved in glycosylation of the TNF receptor grnd, regulating its ligand affinity. Required for normal epithelial growth and architecture. Suppressor of JNK-dependent intestinal stem cell proliferation. The protein is Dolichyl-P-Man:Man5GlcNAc2-PP-dolichol alpha-1,3-mannosyltransferase Alg3 of Drosophila melanogaster (Fruit fly).